The following is a 347-amino-acid chain: O-methyltransferase aunE (347 aa).

Trp-166 provides a ligand contact to S-adenosyl-L-methionine. The Proton acceptor role is filled by His-265.

This sequence belongs to the class I-like SAM-binding methyltransferase superfamily. Cation-independent O-methyltransferase family.

It functions in the pathway secondary metabolite biosynthesis. Its function is as follows. O-methyltransferase; part of the gene cluster that mediates the biosynthesis of aurasperone B, a dimeric gamma-naphthopyrone. The first step in the biosynthesis of aurasperone B is the production of gamma-naphthopyrone precursor YWA1 by the non-reducing polyketide synthase albA, via condensation of one acetyl-CoA starter unit with 6 malonyl-CoA units. YWA1 is then methylated by aunE at position C-6 to yield foncesin which is further methylated at position C-8 by aunD to produce fonsecin B. A key enzyme in the biosynthetic pathway is the cytochrome P450 monooxygenase aunB which catalyzes the oxidative dimerization of fonsecin B to aurasperone B. AunB also catalyzes the oxidative dimerization of rubrofusarin B into aurasperone A. The protein is O-methyltransferase aunE of Aspergillus niger (strain ATCC 1015 / CBS 113.46 / FGSC A1144 / LSHB Ac4 / NCTC 3858a / NRRL 328 / USDA 3528.7).